The primary structure comprises 453 residues: MTTDTIVAQATAPGRGGVGIVRVSGPAAEQVAEIVLGKLPRVRYAEYLPFKDEQGQPLDQGIALLFKAPNSFTGEDVLELQGHGGPVIMDMLVRRILQIKGLRPARPGEFSERAFMNDKLDLAQAEAIADLIEASSEQAARSAMHSLQGQFSSKIQQLVESLIRLRIYVEAAIDFPDEEIDFLSDGKVAGDLYAIMAELDGVRSEAKQGALLREGMKVVIAGRPNAGKSSLLNALAGRESAIVTEIAGTTRDVLREHIHLDGMPLHIIDTAGLRDTLDKVEQIGIERAWAEIEQADRVLFMVDGTTTDAIDPREIWPEFVDRLPKDIGLTVVRNKADLTGEDLAPSQELGHAVYRISAKTELGLPALREHLKACMGFQGNTEGGFMARRRHLDALERAAERLLVAKDQLEIYVAGELVAEELRLAQESLSEITGEFSSDDLLGRIFSSFCIGK.

Positions 22, 79, and 119 each coordinate (6S)-5-formyl-5,6,7,8-tetrahydrofolate. One can recognise a TrmE-type G domain in the interval 215–376 (GMKVVIAGRP…LREHLKACMG (162 aa)). N225 provides a ligand contact to K(+). GTP-binding positions include 225-230 (NAGKSS), 244-250 (TEIAGTT), 269-272 (DTAG), and 334-337 (NKAD). S229 serves as a coordination point for Mg(2+). T244, I246, and T249 together coordinate K(+). Residue T250 participates in Mg(2+) binding. Residue K453 coordinates (6S)-5-formyl-5,6,7,8-tetrahydrofolate.

Belongs to the TRAFAC class TrmE-Era-EngA-EngB-Septin-like GTPase superfamily. TrmE GTPase family. Homodimer. Heterotetramer of two MnmE and two MnmG subunits. It depends on K(+) as a cofactor.

It is found in the cytoplasm. Exhibits a very high intrinsic GTPase hydrolysis rate. Involved in the addition of a carboxymethylaminomethyl (cmnm) group at the wobble position (U34) of certain tRNAs, forming tRNA-cmnm(5)s(2)U34. This is tRNA modification GTPase MnmE from Aeromonas salmonicida (strain A449).